Consider the following 444-residue polypeptide: Probable ribonuclease FAU-1 (444 aa).

This sequence belongs to the FAU-1 family.

Its function is as follows. Probable RNase involved in rRNA stability through maturation and/or degradation of precursor rRNAs. Binds to RNA in loop regions with AU-rich sequences. This chain is Probable ribonuclease FAU-1, found in Pyrobaculum arsenaticum (strain DSM 13514 / JCM 11321 / PZ6).